A 410-amino-acid chain; its full sequence is MTEMTEKATTFLTSQEAPAFPADRTCPYQLPTAYSRLRDEPDALRPVTLYDGRRAWVVTKHEAARRLLADPRLSSDRLHADFPATSPRFKAFRQGSPAFIGMDPPEHGTRRRMTISEFTVKRIKGMRPDVERIVHGFIDDMLAAGPTADLVSQFALPVPSMVICHMLGVPYADHEFFQDASKRLVQAVDADSAVAARDDFERYLDGLITKLESEPGTGLLGKLVTHQLADGEIDRAELISTALLLLVAGHETTASMTSLSVITLLEHPDQHAALRADPSLVPGAVEELLRVLAIADIAGGRIATADIEIDGQLIRAGEGVIVTNSIANRDSSVFENPDRLDVHRSARHHLSFGYGVHQCLGQNLARLELEVILTVLFDRIPTLRLAVPVEQLTLRPGTTIQGVNELPVTW.

Cys-359 provides a ligand contact to heme.

It belongs to the cytochrome P450 family. In terms of assembly, monomer. The cofactor is heme.

In terms of biological role, catalyzes the hydroxylation of sodium ML-236B carboxylate to pravastatin. The protein is Cytochrome P450 105A3 (cyp105A3) of Streptomyces carbophilus.